Here is a 458-residue protein sequence, read N- to C-terminus: Probable plasmid replicative DNA helicase (458 aa).

An SF4 helicase domain is found at 194 to 458 (KIDYVDGLPT…GKFTIQKEAW (265 aa)). 225 to 232 (ARPAMGKT) is an ATP binding site.

The protein belongs to the helicase family. DnaB subfamily. Homohexamer.

The catalysed reaction is Couples ATP hydrolysis with the unwinding of duplex DNA at the replication fork by translocating in the 5'-3' direction. This creates two antiparallel DNA single strands (ssDNA). The leading ssDNA polymer is the template for DNA polymerase III holoenzyme which synthesizes a continuous strand.. The enzyme catalyses ATP + H2O = ADP + phosphate + H(+). A replicative DNA helicase, it participates in initiation and elongation during DNA replication. Travels ahead of the DNA replisome, separating dsDNA into templates for DNA synthesis. A processive ATP-dependent 5'-3' DNA helicase it has DNA-dependent ATPase activity. The protein is Probable plasmid replicative DNA helicase of Chlamydia psittaci (Chlamydophila psittaci).